Consider the following 199-residue polypeptide: NAD(P)H dehydrogenase (quinone) (199 aa).

Residues 4-190 (MLVLYYSAYG…DGARFQGRRV (187 aa)) enclose the Flavodoxin-like domain. Residues 10 to 15 (SAYGHM) and 78 to 80 (TRY) contribute to the FMN site. An NAD(+)-binding site is contributed by Tyr12. Substrate is bound at residue Trp98. Residues 113-119 (STATQYG) and His134 each bind FMN. Residues 162 to 181 (GMTTTADGDGSRQPSAQELD) are disordered. Positions 163-177 (MTTTADGDGSRQPSA) are enriched in polar residues.

Belongs to the WrbA family. The cofactor is FMN.

It catalyses the reaction a quinone + NADH + H(+) = a quinol + NAD(+). The catalysed reaction is a quinone + NADPH + H(+) = a quinol + NADP(+). The chain is NAD(P)H dehydrogenase (quinone) from Brucella suis (strain ATCC 23445 / NCTC 10510).